The primary structure comprises 87 residues: Type 3 secretion system needle filament protein (87 aa).

This sequence belongs to the SctF family. The core secretion machinery of the T3SS is composed of approximately 20 different proteins, including cytoplasmic components, a base, an export apparatus and a needle. This subunit polymerizes and forms the helical needle filament. Forms high-order oligomers in vitro. Forms a stable ternary complex with the YscE-YscG chaperone. Interacts directly with YscG but makes very little direct contact with YscE. Interacts with the needle adapter protein YscI/SctI.

The protein resides in the secreted. It localises to the cell surface. The secretion and/or polymerization may be controlled by the type III secretion system regulator YopR. Interaction with YscE-YscG chaperone prevents premature polymerization of YscF/SctF in the bacterial cytosol and is required for its stability and efficient secretion. Interaction with the needle adapter protein YscI/SctI is required for YscF/SctF secretion, needle assembly and Yop secretion. The N-terminus varies among bacterial species, not only in amino acid composition but also in the number of amino acids, and may function in manipulating the host response to the advantage of the bacteria. In Y.pestis, the N-terminus can function to decrease cytokine induction, perhaps contributing to a favorable immune environment leading to survival of Y.pestis within the eukaryotic host. Component of the type III secretion system (T3SS), also called injectisome, which is used to inject bacterial effector proteins into eukaryotic host cells. YscF/SctF forms the external needle filament that protrudes from the bacterial surface. Essential for the calcium-dependent regulation of T3SS and Yop secretion. Required to block Yop secretion in the presence of extracellular calcium. May be the extracellular T3SS component that senses extracellular calcium and/or participates in transmitting the calcium signal to the cytoplasmic compartment where the block in secretion is initiated. Its function is as follows. During infection, can induce innate immune responses. The needle proteins interact with host TLR2 or TLR4, and induce signaling by NF-kappa-B and/or AP-1. This activation is MyD88 dependent and results in increased expression of cytokines, including TNF-alpha, IL-6 and IL-8. Innate immune responses are modulated by the N-terminal region of YscF/SctF. This Yersinia pestis protein is Type 3 secretion system needle filament protein.